Here is a 148-residue protein sequence, read N- to C-terminus: Putative carbonic anhydrase (148 aa).

The 146-residue stretch at 1–146 folds into the Alpha-carbonic anhydrase domain; the sequence is CLKRLQPGEM…LNGRTVFEVH (146 aa).

The protein belongs to the alpha-carbonic anhydrase family. Zn(2+) is required as a cofactor. As to expression, component of the acid-insoluble organic matrix of the aragonitic skeleton (at protein level).

The protein localises to the secreted. It catalyses the reaction hydrogencarbonate + H(+) = CO2 + H2O. Reversible hydration of carbon dioxide. This is Putative carbonic anhydrase from Acropora millepora (Staghorn coral).